The sequence spans 280 residues: Putative aquaporin-10 (280 aa).

At 1-8 the chain is on the cytoplasmic side; that stretch reads MEAVSSEY. A helical membrane pass occupies residues 9–29; it reads YFPLYSALGYFALVFGIGEIA. Residues 30–64 are Extracellular-facing; the sequence is RIITAKYVSPRGNSQLFLYELIGTIQMCTCVYENG. Residues 65 to 85 form a helical membrane-spanning segment; the sequence is IIFKNYGFPAIFICVALLLTA. Residues 86–114 are Cytoplasmic-facing; it reads GNIFNRGAMTNCAPIFEQFVFGNLGSSKF. The helical transmembrane segment at 115 to 135 threads the bilayer; the sequence is LTILSAQLIGATFASKFAYLI. The Extracellular portion of the chain corresponds to 136 to 164; the sequence is WNITAPYSTAHLENASNLECILHYKQTAG. The chain crosses the membrane as a helical span at residues 165–185; that stretch reads IVIGFEIVGAFVVRIVVAQLL. Over 186–193 the chain is Cytoplasmic; sequence ARPALIKL. The helical transmembrane segment at 194-214 threads the bilayer; the sequence is IPFAISAYLSLALYVVGVPGL. At 215–233 the chain is on the extracellular side; that stretch reads NPIVATARLYGCRGIDNSS. The helical transmembrane segment at 234–254 threads the bilayer; the sequence is FFILYWFCPVLGWLTGAYVVG. The Cytoplasmic portion of the chain corresponds to 255–280; sequence QKSPSKKSAKDVKAEKKAKAAAKKSD. The tract at residues 256 to 280 is disordered; it reads KSPSKKSAKDVKAEKKAKAAAKKSD. A compositionally biased stretch (basic and acidic residues) spans 262-280; it reads SAKDVKAEKKAKAAAKKSD.

This sequence belongs to the MIP/aquaporin (TC 1.A.8) family.

The protein localises to the membrane. The polypeptide is Putative aquaporin-10 (aqp-10) (Caenorhabditis elegans).